Reading from the N-terminus, the 467-residue chain is Microtubule-associated tyrosine carboxypeptidase 1 (467 aa).

Polar residues predominate over residues 1-10 (MVLDSGTQVY). Disordered stretches follow at residues 1–40 (MVLD…PLYP) and 77–111 (MRRS…TLRP). Residue His-276 coordinates Zn(2+). Glu-277 serves as the catalytic Nucleophile. Zn(2+) is bound by residues His-281 and Glu-312.

The protein belongs to the peptidase MATCAP family. It depends on Zn(2+) as a cofactor.

It is found in the cytoplasm. The protein localises to the cytoskeleton. It carries out the reaction C-terminal L-alpha-aminoacyl-L-glutamyl-L-glutamyl-L-tyrosyl-[tubulin] + H2O = C-terminal L-alpha-aminoacyl-L-glutamyl-L-glutamyl-[tubulin] + L-tyrosine. The enzyme catalyses C-terminal L-alpha-aminoacyl-L-glutamyl-L-glutamyl-L-phenylalanyl-[tubulin] + H2O = C-terminal L-alpha-aminoacyl-L-glutamyl-L-glutamyl-[tubulin] + L-phenylalanine. Functionally, tyrosine carboxypeptidase that removes the C-terminal tyrosine residue of alpha-tubulin, thereby regulating microtubule dynamics and function. Also able to remove the C-terminal phenylalanine residue of alpha-tubulin TUBA8. Recognizes adjacent tubulin dimers along the same protofilament. This is Microtubule-associated tyrosine carboxypeptidase 1 from Mus musculus (Mouse).